The chain runs to 278 residues: Large ribosomal subunit protein uL2 (278 aa).

Disordered regions lie at residues 32–57 (ALTE…IGGG) and 221–278 (RGVA…KKKR). The span at 269-278 (IRSRHAKKKR) shows a compositional bias: basic residues.

It belongs to the universal ribosomal protein uL2 family. As to quaternary structure, part of the 50S ribosomal subunit. Forms a bridge to the 30S subunit in the 70S ribosome.

Functionally, one of the primary rRNA binding proteins. Required for association of the 30S and 50S subunits to form the 70S ribosome, for tRNA binding and peptide bond formation. It has been suggested to have peptidyltransferase activity; this is somewhat controversial. Makes several contacts with the 16S rRNA in the 70S ribosome. This Zymomonas mobilis subsp. mobilis (strain ATCC 31821 / ZM4 / CP4) protein is Large ribosomal subunit protein uL2.